We begin with the raw amino-acid sequence, 415 residues long: Probable disease resistance protein At5g66890 (415 aa).

One can recognise an NB-ARC domain in the interval 8 to 43 (SFDALPHNLRECFLDMASFLEDQRIIASTIIDLWSA). 6 LRR repeats span residues 229 to 251 (SLEKLSLWFCHVVDALNELEDVS), 256 to 278 (SLQEIEIDYCYNLDELPYWISQV), 280 to 303 (SLKKLSVTNCNKLCRVIEAIGDLR), 304 to 326 (DLETLRLSSCASLLELPETIDRL), 328 to 351 (NLRFLDVSGGFQLKNLPLEIGKLK), and 352 to 373 (KLEKISMKDCYRCELPDSVKNL). The stretch at 239–260 (HVVDALNELEDVSETLQSLQEI) forms a coiled coil.

It belongs to the disease resistance NB-LRR family.

Functionally, possible disease resistance protein. This is Probable disease resistance protein At5g66890 from Arabidopsis thaliana (Mouse-ear cress).